We begin with the raw amino-acid sequence, 315 residues long: Olfactory receptor 5P59 (315 aa).

Topologically, residues 1–28 (MAFLQDGNHTAVTEFILLGLTDDPVLRV) are extracellular. The N-linked (GlcNAc...) asparagine glycan is linked to Asn-8. Residues 29–49 (VLFTIILCIYLVTVFGNLSTI) traverse the membrane as a helical segment. Residues 50-57 (LLIRVSSQ) lie on the Cytoplasmic side of the membrane. The chain crosses the membrane as a helical span at residues 58-78 (LHHPMYFFLSHLASVDIGISS). Over 79 to 102 (SVTPSMLVNFLLERSTISYLGCGI) the chain is Extracellular. The cysteines at positions 100 and 193 are disulfide-linked. The chain crosses the membrane as a helical span at residues 103–123 (QLGSADFIASVECFLLAAMAY). Residues 124–136 (DRFMAVCNPLLYS) are Cytoplasmic-facing. The chain crosses the membrane as a helical span at residues 137 to 157 (TKMSTQVCVQLVVGSYIGGFL). The Extracellular portion of the chain corresponds to 158–200 (NASLIVTVYFFSFLFCGPNRIDHFFCDFAPLAELSCSDVSVSV). Residues 201 to 221 (LIISFSAGSVTMITVFVIVIS) traverse the membrane as a helical segment. The Cytoplasmic portion of the chain corresponds to 222–241 (YSYILITILKMHSTEGRHKA). Residues 242 to 262 (FSTCTSHLTAVTLYYGTITFI) traverse the membrane as a helical segment. At 263–275 (YVMPKSSFSTDQN) the chain is on the extracellular side. Residues 276 to 296 (KVVSVFYMVMIPMLNPLIYSL) form a helical membrane-spanning segment. At 297 to 315 (SNNEIKGALKRQLGMKTLS) the chain is on the cytoplasmic side.

It belongs to the G-protein coupled receptor 1 family.

It is found in the cell membrane. Functionally, potential odorant receptor. This Mus musculus (Mouse) protein is Olfactory receptor 5P59.